Reading from the N-terminus, the 79-residue chain is UPF0154 protein Lm4b_01315 (79 aa).

Residues 2–22 traverse the membrane as a helical segment; the sequence is WIYILVGIICLLAGLAGGFFI. Over residues 57–66 the composition is skewed to polar residues; it reads KINQMMSAMN. Residues 57 to 79 are disordered; sequence KINQMMSAMNKQQEKEKPKKTKK.

This sequence belongs to the UPF0154 family.

Its subcellular location is the cell membrane. The chain is UPF0154 protein Lm4b_01315 from Listeria monocytogenes serotype 4b (strain CLIP80459).